The sequence spans 429 residues: Probable proton-coupled zinc antiporter SLC30A4 (429 aa).

The Cytoplasmic portion of the chain corresponds to 1–113 (MAGSGAWKRL…ILKQRKVKAR (113 aa)). The helical transmembrane segment at 114–134 (LTIAAVLYLLFMIGELVGGYI) threads the bilayer. The Lumenal segment spans residues 135–143 (ANSLAIMTD). A helical membrane pass occupies residues 144-164 (ALHMLTDLSAIILTLLALWLS). Positions 146 and 150 each coordinate Zn(2+). Residues 165 to 178 (SKSPTKRFTFGFHR) are Cytoplasmic-facing. The chain crosses the membrane as a helical span at residues 179–199 (LEVLSAMISVLLVYILMGFLL). Residues 200-216 (YEAVQRTIHMNYEINGD) lie on the Lumenal side of the membrane. A helical membrane pass occupies residues 217 to 237 (IMLITAAVGVAVNVIMGFLLN). Topologically, residues 238 to 274 (QSGHRHSHSHSLPSNSPTRGSGCERNHGQDSLAVRAA) are cytoplasmic. The segment at 240–264 (GHRHSHSHSLPSNSPTRGSGCERNH) is zinc binding. A helical membrane pass occupies residues 275–295 (FVHALGDLVQSVGVLIAAYII). 2 residues coordinate Zn(2+): His277 and Asp281. The Lumenal segment spans residues 296 to 310 (RFKPEYKIADPICTY). Residues 311–331 (VFSLLVAFTTFRIIWDTVVII) traverse the membrane as a helical segment. Residues 332 to 429 (LEGVPSHLNV…TCANCQSSSP (98 aa)) lie on the Cytoplasmic side of the membrane.

It belongs to the cation diffusion facilitator (CDF) transporter (TC 2.A.4) family. SLC30A subfamily. As to quaternary structure, homodimer; dityrosine-linked. Homodimerization could be specific of the human protein and enhances the zinc transport efficiency. Interacts with TMEM163. In terms of processing, homodimerization through dityrosine bonds is stimulated by oxidative stress.

The protein resides in the endosome membrane. Its subcellular location is the late endosome membrane. It is found in the lysosome membrane. The catalysed reaction is Zn(2+)(in) + 2 H(+)(out) = Zn(2+)(out) + 2 H(+)(in). Functionally, probable proton-coupled zinc ion antiporter mediating zinc import from cytoplasm potentially into the endocytic compartment. Controls zinc deposition in milk. This chain is Probable proton-coupled zinc antiporter SLC30A4, found in Homo sapiens (Human).